Here is a 150-residue protein sequence, read N- to C-terminus: UPF0179 protein Mbur_1033 (150 aa).

Belongs to the UPF0179 family.

This chain is UPF0179 protein Mbur_1033, found in Methanococcoides burtonii (strain DSM 6242 / NBRC 107633 / OCM 468 / ACE-M).